Consider the following 589-residue polypeptide: ATP-dependent lipid A-core flippase (589 aa).

Helical transmembrane passes span 29–49, 70–90, 157–177, 261–281, and 283–303; these read LLLV…TGFL, WLPV…YITD, VIGA…TILV, MIGA…ALAG, and LTAG…PGLK. The ABC transmembrane type-1 domain occupies 32-314; that stretch reads VAALIAALIE…LTNVQNMVQR (283 aa). An ABC transporter domain is found at 346 to 582; sequence IEFRDVTARY…GGLYSHLHGM (237 aa). 380–387 is a binding site for ATP; sequence GRSGSGKS.

It belongs to the ABC transporter superfamily. Lipid exporter (TC 3.A.1.106) family. In terms of assembly, homodimer.

It localises to the cell inner membrane. It carries out the reaction ATP + H2O + lipid A-core oligosaccharideSide 1 = ADP + phosphate + lipid A-core oligosaccharideSide 2.. Functionally, involved in lipopolysaccharide (LPS) biosynthesis. Translocates lipid A-core from the inner to the outer leaflet of the inner membrane. Transmembrane domains (TMD) form a pore in the inner membrane and the ATP-binding domain (NBD) is responsible for energy generation. The protein is ATP-dependent lipid A-core flippase of Xanthomonas oryzae pv. oryzae (strain MAFF 311018).